Consider the following 489-residue polypeptide: Leukocyte immunoglobulin-like receptor subfamily A member 1 (489 aa).

A signal peptide spans 1–16 (MTPIVTVLICLRLSLG). Residues 17–461 (PRTHVQAGTL…SHPQDYTVEN (445 aa)) lie on the Extracellular side of the membrane. Ig-like C2-type domains are found at residues 27–116 (PKPT…PLEL), 119–224 (TGAY…GVSK), 226–315 (PSLS…DPLD), and 326–415 (PFIS…SDSL). Cysteines 49 and 98 form a disulfide. An N-linked (GlcNAc...) asparagine glycan is attached at Asn140. Disulfide bonds link Cys145–Cys197, Cys157–Cys167, and Cys246–Cys297. N-linked (GlcNAc...) asparagine glycosylation is found at Asn281, Asn302, and Asn341. The cysteines at positions 346 and 397 are disulfide-linked. The segment at 425 to 453 (TLSPPQNKSDSKAGAANTLSPSQNKTASH) is disordered. Asn431 and Asn448 each carry an N-linked (GlcNAc...) asparagine glycan. Over residues 441-453 (NTLSPSQNKTASH) the composition is skewed to polar residues. The chain crosses the membrane as a helical span at residues 462-482 (LIRMGIAGLVLVVLGILLFEA). At 483–489 (QHSQRSL) the chain is on the cytoplasmic side.

Detected in monocytes and B-cells.

The protein localises to the membrane. Its function is as follows. May act as receptor for class I MHC antigens. In Homo sapiens (Human), this protein is Leukocyte immunoglobulin-like receptor subfamily A member 1 (LILRA1).